The following is a 318-amino-acid chain: MGRDNDQKKNKKKRNRSNENEKSVEKVVANEEKVPTQQKQKQQQGQQGNCNQSKKKKNQEVYPFGNYRNYYGYRISNDTDEDPRLKVLKKEWFEGKDCLDIGCNSGIMTIHIAKKFGCRSILGVDIDTSRIEDAHWHLRKFVRMQNSTKPSEKKSSSEGADGVHGSKEPSVSLSNGEAKADSAETKDLSQIVSFQKENFVQTRNLDDNRYDTILCLSVTKWVHLNWGDDGLITLFSKIWRLLQPGGIFVMEPQPWKSYENNRRVSETTAMNYRTIVLRPDRFQEILLDKIGFRTVEDLTSSLSGASKGFDRQILAFQK.

Disordered stretches follow at residues 1 to 61 (MGRD…NQEV) and 146 to 184 (NSTKPSEKKSSSEGADGVHGSKEPSVSLSNGEAKADSAE). Positions 16–34 (RSNENEKSVEKVVANEEKV) are enriched in basic and acidic residues. Over residues 37-52 (QQKQKQQQGQQGNCNQ) the composition is skewed to low complexity. A Bin3-type SAM domain is found at 82–318 (DPRLKVLKKE…FDRQILAFQK (237 aa)).

Belongs to the methyltransferase superfamily.

Functionally, probable RNA methyltransferase. This is Probable RNA methyltransferase At5g51130 from Arabidopsis thaliana (Mouse-ear cress).